The chain runs to 199 residues: Pneumococcal vaccine antigen A homolog (199 aa).

It is found in the cell surface. This chain is Pneumococcal vaccine antigen A homolog (pvaA), found in Streptococcus pyogenes serotype M3 (strain ATCC BAA-595 / MGAS315).